Reading from the N-terminus, the 1887-residue chain is Bifunctional serine/threonine-protein kinase/NEDD4-like E3 ubiquitin-protein ligase (1887 aa).

Disordered stretches follow at residues 19–55 (TPQV…TTNF) and 72–98 (TDNY…TKEN). Low complexity-rich tracts occupy residues 26–54 (NNSN…STTN) and 72–97 (TDNY…NTKE). RCC1 repeat units follow at residues 206–260 (QGNL…ALTI), 262–314 (GKVY…NNNN), 356–409 (KGLL…VLTN), 411–470 (GLVF…AISD), 472–528 (NDTY…AMSI), and 529–581 (DGSL…IVEK). The tract at residues 299–333 (NNNNNNNNNNSTNNNNNNNNDGAQQQFSLSQNSSS) is disordered. Disordered stretches follow at residues 594–619 (LPSS…SDSN), 823–858 (VLVH…KNGT), and 1030–1088 (DDDN…NNNN). Positions 825–839 (VHQDEKQQQREKSET) are enriched in basic and acidic residues. Over residues 840-852 (ELEEEQDEEEEDS) the composition is skewed to acidic residues. Low complexity predominate over residues 1036–1088 (ENNSVNNNSNNNNNNNNNNNNNNNNNNNNNNNIDNNINSNSINDSSNNNNNNN). In terms of domain architecture, Protein kinase spans 1158-1437 (YDIIKTLSTH…AHQIAVHPYF (280 aa)). ATP is bound by residues 1164–1172 (LSTHPHNVY) and K1184. D1281 serves as the catalytic Proton acceptor. In terms of domain architecture, HECT spans 1501-1887 (ESNKLFCRLE…LEYVDGFAFI (387 aa)). The tract at residues 1586–1628 (NNNNNNEENNNNNNNNNNNNNNNNNNNNNNNNNNNNNNNNNEE) is disordered. The Glycyl thioester intermediate role is filled by C1855.

The protein in the N-terminal section; belongs to the protein kinase superfamily. Ser/Thr protein kinase family. This sequence in the C-terminal section; belongs to the protein kinase superfamily. CAMK Ser/Thr protein kinase family.

The enzyme catalyses L-seryl-[protein] + ATP = O-phospho-L-seryl-[protein] + ADP + H(+). The catalysed reaction is L-threonyl-[protein] + ATP = O-phospho-L-threonyl-[protein] + ADP + H(+). It catalyses the reaction S-ubiquitinyl-[E2 ubiquitin-conjugating enzyme]-L-cysteine + [acceptor protein]-L-lysine = [E2 ubiquitin-conjugating enzyme]-L-cysteine + N(6)-ubiquitinyl-[acceptor protein]-L-lysine.. The protein operates within protein modification; protein ubiquitination. This Dictyostelium discoideum (Social amoeba) protein is Bifunctional serine/threonine-protein kinase/NEDD4-like E3 ubiquitin-protein ligase.